Here is a 327-residue protein sequence, read N- to C-terminus: Flotillin-like protein FloA (327 aa).

A helical transmembrane segment spans residues 7-27; it reads FLVPILIVILLLVFFSLVPVG.

This sequence belongs to the flotillin-like FloA family. As to quaternary structure, homooligomerizes.

It localises to the cell membrane. Its subcellular location is the membrane raft. Functionally, found in functional membrane microdomains (FMM) that may be equivalent to eukaryotic membrane rafts. FMMs are highly dynamic and increase in number as cells age. Flotillins are thought to be important factors in membrane fluidity. This Finegoldia magna (strain ATCC 29328 / DSM 20472 / WAL 2508) (Peptostreptococcus magnus) protein is Flotillin-like protein FloA.